Consider the following 131-residue polypeptide: Ribosome-binding factor A (131 aa).

This sequence belongs to the RbfA family. As to quaternary structure, monomer. Binds 30S ribosomal subunits, but not 50S ribosomal subunits or 70S ribosomes.

The protein resides in the cytoplasm. One of several proteins that assist in the late maturation steps of the functional core of the 30S ribosomal subunit. Associates with free 30S ribosomal subunits (but not with 30S subunits that are part of 70S ribosomes or polysomes). Required for efficient processing of 16S rRNA. May interact with the 5'-terminal helix region of 16S rRNA. The polypeptide is Ribosome-binding factor A (Protochlamydia amoebophila (strain UWE25)).